The chain runs to 213 residues: ATP phosphoribosyltransferase (213 aa).

It belongs to the ATP phosphoribosyltransferase family. Short subfamily. In terms of assembly, heteromultimer composed of HisG and HisZ subunits.

The protein localises to the cytoplasm. The catalysed reaction is 1-(5-phospho-beta-D-ribosyl)-ATP + diphosphate = 5-phospho-alpha-D-ribose 1-diphosphate + ATP. It functions in the pathway amino-acid biosynthesis; L-histidine biosynthesis; L-histidine from 5-phospho-alpha-D-ribose 1-diphosphate: step 1/9. Functionally, catalyzes the condensation of ATP and 5-phosphoribose 1-diphosphate to form N'-(5'-phosphoribosyl)-ATP (PR-ATP). Has a crucial role in the pathway because the rate of histidine biosynthesis seems to be controlled primarily by regulation of HisG enzymatic activity. In Teredinibacter turnerae (strain ATCC 39867 / T7901), this protein is ATP phosphoribosyltransferase.